A 376-amino-acid chain; its full sequence is Erythronate-4-phosphate dehydrogenase (376 aa).

Substrate-binding residues include serine 45 and threonine 67. Residues 127–128 (QV), aspartate 147, and threonine 176 each bind NAD(+). Arginine 209 is a catalytic residue. Position 233 (aspartate 233) interacts with NAD(+). The active site involves glutamate 238. Catalysis depends on histidine 255, which acts as the Proton donor. NAD(+) is bound at residue glycine 258. Tyrosine 259 lines the substrate pocket.

It belongs to the D-isomer specific 2-hydroxyacid dehydrogenase family. PdxB subfamily. In terms of assembly, homodimer.

The protein localises to the cytoplasm. The catalysed reaction is 4-phospho-D-erythronate + NAD(+) = (R)-3-hydroxy-2-oxo-4-phosphooxybutanoate + NADH + H(+). It functions in the pathway cofactor biosynthesis; pyridoxine 5'-phosphate biosynthesis; pyridoxine 5'-phosphate from D-erythrose 4-phosphate: step 2/5. Its function is as follows. Catalyzes the oxidation of erythronate-4-phosphate to 3-hydroxy-2-oxo-4-phosphonooxybutanoate. This chain is Erythronate-4-phosphate dehydrogenase, found in Aliivibrio salmonicida (strain LFI1238) (Vibrio salmonicida (strain LFI1238)).